We begin with the raw amino-acid sequence, 113 residues long: Tubulin alpha chain (113 aa).

Glu-52 serves as a coordination point for GTP. Mg(2+) is bound at residue Glu-52.

This sequence belongs to the tubulin family. As to quaternary structure, dimer of alpha and beta chains. A typical microtubule is a hollow water-filled tube with an outer diameter of 25 nm and an inner diameter of 15 nM. Alpha-beta heterodimers associate head-to-tail to form protofilaments running lengthwise along the microtubule wall with the beta-tubulin subunit facing the microtubule plus end conferring a structural polarity. Microtubules usually have 13 protofilaments but different protofilament numbers can be found in some organisms and specialized cells. It depends on Mg(2+) as a cofactor.

The protein resides in the cytoplasm. The protein localises to the cytoskeleton. It catalyses the reaction GTP + H2O = GDP + phosphate + H(+). In terms of biological role, tubulin is the major constituent of microtubules, a cylinder consisting of laterally associated linear protofilaments composed of alpha- and beta-tubulin heterodimers. Microtubules grow by the addition of GTP-tubulin dimers to the microtubule end, where a stabilizing cap forms. Below the cap, tubulin dimers are in GDP-bound state, owing to GTPase activity of alpha-tubulin. In Picea abies (Norway spruce), this protein is Tubulin alpha chain (TUBA).